The following is a 389-amino-acid chain: ATP phosphoribosyltransferase regulatory subunit (389 aa).

The protein belongs to the class-II aminoacyl-tRNA synthetase family. HisZ subfamily. Heteromultimer composed of HisG and HisZ subunits.

It localises to the cytoplasm. The protein operates within amino-acid biosynthesis; L-histidine biosynthesis; L-histidine from 5-phospho-alpha-D-ribose 1-diphosphate: step 1/9. Required for the first step of histidine biosynthesis. May allow the feedback regulation of ATP phosphoribosyltransferase activity by histidine. In Moorella thermoacetica (strain ATCC 39073 / JCM 9320), this protein is ATP phosphoribosyltransferase regulatory subunit.